Consider the following 603-residue polypeptide: Iron-sulfur clusters transporter ATM1, mitochondrial (603 aa).

Residues 20-41 (VLLAVGLLVGGKVLNVQVPFFF) traverse the membrane as a helical segment. The region spanning 20-310 (VLLAVGLLVG…LGSVYRELRQ (291 aa)) is the ABC transmembrane type-1 domain. Residues 42 to 64 (REIVDSLNVDIAATGGTVATVAG) lie on the Mitochondrial intermembrane side of the membrane. Residues 65–88 (TMIFAYGASRIGAVVSQELRNAVF) traverse the membrane as a helical segment. Over 89-137 (SSVAQKAIRRVATRTFGHLLNLDLNFHLSKQTGGLTRAIDRGTKGISFL) the chain is Mitochondrial matrix. Residues 138-161 (LTSMVFHIVPTALEISMVCGILTY) form a helical membrane-spanning segment. Residue glutamine 162 is a topological domain, mitochondrial intermembrane. A helical transmembrane segment spans residues 163–183 (FGWEFAAVTALTMSAYTAFTI). At 184–249 (WTTAWRTKFR…SSIKVATSLA (66 aa)) the chain is on the mitochondrial matrix side. Residues 189–193 (RTKFR) and 252–255 (NSGQ) each bind glutathione. The chain crosses the membrane as a helical span at residues 250–268 (FLNSGQNIIFSSALTIMMW). The Mitochondrial intermembrane portion of the chain corresponds to 269 to 283 (LGAKGIVAGSLSVGD). A helical membrane pass occupies residues 284–305 (LVLINQLVFQLSVPLNFLGSVY). Glycine 302 is a binding site for glutathione. The Mitochondrial matrix segment spans residues 306–603 (RELRQSLLDM…SEREAPVPVK (298 aa)). The 237-residue stretch at 345-581 (IRFDNVSFGY…NGLYTELWMA (237 aa)) folds into the ABC transporter domain. ATP contacts are provided by residues tyrosine 354 and 378–389 (GPSGCGKSTLLR).

The protein belongs to the ABC transporter superfamily. ABCB family. Heavy Metal importer (TC 3.A.1.210) subfamily. As to quaternary structure, homodimer.

It localises to the mitochondrion inner membrane. Performs an essential function in the generation of cytoplasmic iron-sulfur proteins by mediating the ATP-dependent export of Fe/S cluster precursors synthesized by NFS1 and other mitochondrial proteins. Hydrolyzes ATP. Binds glutathione and may function by transporting a glutathione-conjugated iron-sulfur compound. The protein is Iron-sulfur clusters transporter ATM1, mitochondrial of Chaetomium globosum (strain ATCC 6205 / CBS 148.51 / DSM 1962 / NBRC 6347 / NRRL 1970) (Soil fungus).